Consider the following 153-residue polypeptide: UPF0260 protein YcgN (153 aa).

This sequence belongs to the UPF0260 family.

This chain is UPF0260 protein YcgN, found in Salmonella typhi.